The primary structure comprises 340 residues: HTH-type transcriptional regulator PtxS (340 aa).

Residues 12 to 67 (VTISEVAQAAGVSKATVSRYIGGDRQLLADATAQRIEAVIEQLGYRPNRMASALKR) enclose the HTH lacI-type domain. A DNA-binding region (H-T-H motif) is located at residues 14–33 (ISEVAQAAGVSKATVSRYIG).

Homodimer.

With respect to regulation, 2-ketogluconate acts as a molecular effector and causes dissociation of PtxS from its target promoter. Glucose negatively affects the molecular binding of PtxS and 2KGA, and gluconic acid inhibits the PtxS-2KGA binding reaction. Its function is as follows. Involved in the regulation of 2-ketogluconic acid metabolism via the control of the expression of the kgu operon. Binds directly to a 14-bp palindrome sequence via its conserved HTH motif. The protein is HTH-type transcriptional regulator PtxS of Pseudomonas plecoglossicida.